The primary structure comprises 474 residues: Hydrogenobyrinate a,c-diamide synthase (474 aa).

Positions 269 to 459 constitute a GATase cobBQ-type domain; the sequence is VVAVAGGQAF…LHTHWAGCPQ (191 aa). Cys352 functions as the Nucleophile in the catalytic mechanism.

The protein belongs to the CobB/CbiA family. Mg(2+) serves as cofactor.

It catalyses the reaction hydrogenobyrinate + 2 L-glutamine + 2 ATP + 2 H2O = hydrogenobyrinate a,c-diamide + 2 L-glutamate + 2 ADP + 2 phosphate + 2 H(+). The protein operates within cofactor biosynthesis; adenosylcobalamin biosynthesis; cob(II)yrinate a,c-diamide from precorrin-2 (aerobic route): step 9/10. Its function is as follows. Catalyzes the ATP-dependent amidation of the two carboxylate groups at positions a and c of hydrogenobyrinate, using either L-glutamine or ammonia as the nitrogen source. The sequence is that of Hydrogenobyrinate a,c-diamide synthase from Thermobifida fusca (strain YX).